We begin with the raw amino-acid sequence, 407 residues long: Argininosuccinate synthase (407 aa).

ATP-binding positions include 11–19 (AYSGGLDTS) and alanine 38. L-citrulline-binding residues include tyrosine 91 and serine 96. Residue glycine 121 participates in ATP binding. Residues threonine 123, asparagine 127, and aspartate 128 each coordinate L-aspartate. Position 127 (asparagine 127) interacts with L-citrulline. Residues arginine 131, serine 181, serine 190, glutamate 266, and tyrosine 278 each contribute to the L-citrulline site.

This sequence belongs to the argininosuccinate synthase family. Type 1 subfamily. Homotetramer.

It localises to the cytoplasm. The enzyme catalyses L-citrulline + L-aspartate + ATP = 2-(N(omega)-L-arginino)succinate + AMP + diphosphate + H(+). Its pathway is amino-acid biosynthesis; L-arginine biosynthesis; L-arginine from L-ornithine and carbamoyl phosphate: step 2/3. This Campylobacter concisus (strain 13826) protein is Argininosuccinate synthase.